Here is a 204-residue protein sequence, read N- to C-terminus: Leucyl/phenylalanyl-tRNA--protein transferase (204 aa).

The protein belongs to the L/F-transferase family.

Its subcellular location is the cytoplasm. The enzyme catalyses N-terminal L-lysyl-[protein] + L-leucyl-tRNA(Leu) = N-terminal L-leucyl-L-lysyl-[protein] + tRNA(Leu) + H(+). It carries out the reaction N-terminal L-arginyl-[protein] + L-leucyl-tRNA(Leu) = N-terminal L-leucyl-L-arginyl-[protein] + tRNA(Leu) + H(+). It catalyses the reaction L-phenylalanyl-tRNA(Phe) + an N-terminal L-alpha-aminoacyl-[protein] = an N-terminal L-phenylalanyl-L-alpha-aminoacyl-[protein] + tRNA(Phe). Functionally, functions in the N-end rule pathway of protein degradation where it conjugates Leu, Phe and, less efficiently, Met from aminoacyl-tRNAs to the N-termini of proteins containing an N-terminal arginine or lysine. This chain is Leucyl/phenylalanyl-tRNA--protein transferase, found in Sinorhizobium medicae (strain WSM419) (Ensifer medicae).